The chain runs to 474 residues: Ribulose bisphosphate carboxylase large chain (474 aa).

Positions 122 and 172 each coordinate substrate. Lys-174 (proton acceptor) is an active-site residue. Substrate is bound at residue Lys-176. Positions 200, 202, and 203 each coordinate Mg(2+). The residue at position 200 (Lys-200) is an N6-carboxylysine. The active-site Proton acceptor is the His-293. 3 residues coordinate substrate: Arg-294, His-326, and Ser-378.

The protein belongs to the RuBisCO large chain family. Type I subfamily. In terms of assembly, heterohexadecamer of 8 large chains and 8 small chains; disulfide-linked. The disulfide link is formed within the large subunit homodimers. Mg(2+) is required as a cofactor. The disulfide bond which can form in the large chain dimeric partners within the hexadecamer appears to be associated with oxidative stress and protein turnover.

It is found in the carboxysome. The catalysed reaction is 2 (2R)-3-phosphoglycerate + 2 H(+) = D-ribulose 1,5-bisphosphate + CO2 + H2O. It catalyses the reaction D-ribulose 1,5-bisphosphate + O2 = 2-phosphoglycolate + (2R)-3-phosphoglycerate + 2 H(+). RuBisCO catalyzes two reactions: the carboxylation of D-ribulose 1,5-bisphosphate, the primary event in carbon dioxide fixation, as well as the oxidative fragmentation of the pentose substrate in the photorespiration process. Both reactions occur simultaneously and in competition at the same active site. The sequence is that of Ribulose bisphosphate carboxylase large chain from Gloeobacter violaceus (strain ATCC 29082 / PCC 7421).